Here is a 337-residue protein sequence, read N- to C-terminus: Biotin synthase (337 aa).

The region spanning 55–284 (YFKNTIELCS…KKTILLAGGK (230 aa)) is the Radical SAM core domain. [4Fe-4S] cluster-binding residues include cysteine 73, cysteine 77, and cysteine 80. [2Fe-2S] cluster contacts are provided by cysteine 117, cysteine 149, and cysteine 209.

This sequence belongs to the radical SAM superfamily. Biotin synthase family. As to quaternary structure, homodimer. [4Fe-4S] cluster is required as a cofactor. [2Fe-2S] cluster serves as cofactor.

The enzyme catalyses (4R,5S)-dethiobiotin + (sulfur carrier)-SH + 2 reduced [2Fe-2S]-[ferredoxin] + 2 S-adenosyl-L-methionine = (sulfur carrier)-H + biotin + 2 5'-deoxyadenosine + 2 L-methionine + 2 oxidized [2Fe-2S]-[ferredoxin]. It participates in cofactor biosynthesis; biotin biosynthesis; biotin from 7,8-diaminononanoate: step 2/2. Functionally, catalyzes the conversion of dethiobiotin (DTB) to biotin by the insertion of a sulfur atom into dethiobiotin via a radical-based mechanism. This is Biotin synthase from Caldicellulosiruptor bescii (strain ATCC BAA-1888 / DSM 6725 / KCTC 15123 / Z-1320) (Anaerocellum thermophilum).